Reading from the N-terminus, the 156-residue chain is MVRQSISLKAELEEIQNIFPATYKIFFLKIKCSNCGEIPDKWIGLDKSNIEVIGKSNVNLATKCKGCNRENSIVIEDTDYSSRTIESEKDFEIARFDCRGVEIEEFDPRDNWIVVSSSGKEYKDVDLEEGEWSEFEERTSTSLTILSIESSIKKIK.

4 residues coordinate Zn(2+): C32, C35, C64, and C67.

This sequence belongs to the UPF0587 family.

The chain is UPF0587 protein from Dictyostelium discoideum (Social amoeba).